A 128-amino-acid polypeptide reads, in one-letter code: Large ribosomal subunit protein bL12 (128 aa).

Belongs to the bacterial ribosomal protein bL12 family. In terms of assembly, homodimer. Part of the ribosomal stalk of the 50S ribosomal subunit. Forms a multimeric L10(L12)X complex, where L10 forms an elongated spine to which 2 to 4 L12 dimers bind in a sequential fashion. Binds GTP-bound translation factors.

In terms of biological role, forms part of the ribosomal stalk which helps the ribosome interact with GTP-bound translation factors. Is thus essential for accurate translation. The sequence is that of Large ribosomal subunit protein bL12 from Streptomyces antibioticus.